The chain runs to 38 residues: U9-ctenitoxin-Pk1a (38 aa).

4 disulfide bridges follow: C2/C17, C9/C22, C16/C36, and C24/C34.

In terms of tissue distribution, expressed by the venom gland.

The protein localises to the secreted. The sequence is that of U9-ctenitoxin-Pk1a from Phoneutria keyserlingi (Brazilian wandering spider).